The chain runs to 322 residues: Daunorubicin resistance ATP-binding protein DrrA2 (322 aa).

The 231-residue stretch at 6–236 (VRAEAMEKRY…VGGDRIEVVV (231 aa)) folds into the ABC transporter domain. 38 to 45 (GPNGAGKT) is a binding site for ATP.

Belongs to the ABC transporter superfamily. Drug exporter-1 (DrugE1) (TC 3.A.1.105) family. The complex is probably composed of two ATP-binding proteins (DrrA2) and two transmembrane proteins (DrrB2).

It is found in the cell membrane. The enzyme catalyses daunorubicin(in) + ATP + H2O = daunorubicin(out) + ADP + phosphate + H(+). Functionally, part of the ABC transporter complex DrrA2B2 involved in daunorubicin efflux. Responsible for energy coupling to the transport system. Confers self-resistance to daunorubicin, an antibiotic produced by S.coeruleorubidus. In Streptomyces coeruleorubidus, this protein is Daunorubicin resistance ATP-binding protein DrrA2.